We begin with the raw amino-acid sequence, 230 residues long: MPKYTLPTRDALLKAMQVGETSIEAAEYMATRFEQILTKAKLLPECNDMLEKIKEYAQFVKFKLLSSAQVWSGQERPTSDYQNTQENKAEFLASHLEGLPSGLKLEVAIGDDAKILRGFSSNGKMVEGDQLKTMDGLLEGWLAKNSLAISGGAVVKIDNTGNQTKVDPQEIRQLINDSEKGVAKYFADKGVGMEVAQRTYQEPKALETKREEIRQEIESGAEAPTTQSIR.

Residues glutamate 202–arginine 230 are disordered. Basic and acidic residues predominate over residues lysine 204 to isoleucine 217.

In terms of assembly, the T4BSS is a complex nanomachine composed of several subcomplexes. This subunit is part of the Type IV Coupling Complex (T4CC), a subcomplex composed of the DotLMNYZ core and the IcmSW-LvgA adapter subunits, linked by the C-terminal tail of DotL. Six DotLMNYZ hetero-pentameric units may assemble into a hexameric nanomachine, forming an inner membrane channel for effectors to pass through. Interacts exclusively with DotZ. DotY and DotZ are co-dependent for the assembly into the T4CC.

The protein resides in the cytoplasm. Component of the Dot/Icm type IVB secretion system (T4BSS), which is used to inject bacterial effector proteins into eukaryotic host cells. Part of a subcomplex which recruits effector proteins and delivers them to the core transmembrane subcomplex. DotY and DotZ play a role in effector translocation, but are not essential and do not influence the stability of the subcomplex main components. The DotY/DotZ main function is to optimize secretion by modulating the delivery trajectory of the IcmSW module and the localization of the machinery to the poles. This chain is Type 4 apparatus protein DotY, found in Legionella pneumophila subsp. pneumophila (strain Philadelphia 1 / ATCC 33152 / DSM 7513).